We begin with the raw amino-acid sequence, 852 residues long: Nucleolar protein 14 homolog (852 aa).

A disordered region spans residues 1–40 (MVAKGKKASADAVYAKKTTRSANPFDNSTAQSSKRGNPFD). A compositionally biased stretch (polar residues) spans 20–35 (RSANPFDNSTAQSSKR). A coiled-coil region spans residues 190-221 (IDEMIVEQKRRKNEIAKEKDEVYDLTEKLDAN). Disordered regions lie at residues 288–324 (RRMR…GEDD) and 338–410 (LGTH…KSAD). Positions 344-353 (GKKEAVLKGD) are enriched in basic and acidic residues. Acidic residues predominate over residues 354–381 (ENEDDDDKEGEEEEEEDSDEESDSEVDN). Positions 774 to 851 (KMSKAKEERA…ELSRAKKKKK (78 aa)) form a coiled coil.

Belongs to the NOP14 family. As to quaternary structure, component of the ribosomal small subunit (SSU) processome.

Its subcellular location is the nucleus. It localises to the nucleolus. Functionally, involved in nucleolar processing of pre-18S ribosomal RNA. Has a role in the nuclear export of 40S pre-ribosomal subunit to the cytoplasm. The sequence is that of Nucleolar protein 14 homolog (l(3)07882) from Drosophila melanogaster (Fruit fly).